Reading from the N-terminus, the 364-residue chain is tRNA/tmRNA (uracil-C(5))-methyltransferase (364 aa).

The S-adenosyl-L-methionine site is built by Gln-188, Tyr-216, Asn-221, Glu-237, and Asp-297. The active-site Nucleophile is the Cys-322. Glu-356 functions as the Proton acceptor in the catalytic mechanism.

The protein belongs to the class I-like SAM-binding methyltransferase superfamily. RNA M5U methyltransferase family. TrmA subfamily.

The catalysed reaction is uridine(54) in tRNA + S-adenosyl-L-methionine = 5-methyluridine(54) in tRNA + S-adenosyl-L-homocysteine + H(+). It catalyses the reaction uridine(341) in tmRNA + S-adenosyl-L-methionine = 5-methyluridine(341) in tmRNA + S-adenosyl-L-homocysteine + H(+). Dual-specificity methyltransferase that catalyzes the formation of 5-methyluridine at position 54 (m5U54) in all tRNAs, and that of position 341 (m5U341) in tmRNA (transfer-mRNA). The polypeptide is tRNA/tmRNA (uracil-C(5))-methyltransferase (Teredinibacter turnerae (strain ATCC 39867 / T7901)).